Consider the following 376-residue polypeptide: tRNA 2-selenouridine synthase (376 aa).

In terms of domain architecture, Rhodanese spans 15–138 (FVAGKPLIDL…MRQYLIGVIE (124 aa)). The S-selanylcysteine intermediate role is filled by cysteine 98.

This sequence belongs to the SelU family. Monomer.

It carries out the reaction 5-methylaminomethyl-2-thiouridine(34) in tRNA + selenophosphate + (2E)-geranyl diphosphate + H2O + H(+) = 5-methylaminomethyl-2-selenouridine(34) in tRNA + (2E)-thiogeraniol + phosphate + diphosphate. The catalysed reaction is 5-methylaminomethyl-2-thiouridine(34) in tRNA + (2E)-geranyl diphosphate = 5-methylaminomethyl-S-(2E)-geranyl-thiouridine(34) in tRNA + diphosphate. The enzyme catalyses 5-methylaminomethyl-S-(2E)-geranyl-thiouridine(34) in tRNA + selenophosphate + H(+) = 5-methylaminomethyl-2-(Se-phospho)selenouridine(34) in tRNA + (2E)-thiogeraniol. It catalyses the reaction 5-methylaminomethyl-2-(Se-phospho)selenouridine(34) in tRNA + H2O = 5-methylaminomethyl-2-selenouridine(34) in tRNA + phosphate. Involved in the post-transcriptional modification of the uridine at the wobble position (U34) of tRNA(Lys), tRNA(Glu) and tRNA(Gln). Catalyzes the conversion of 2-thiouridine (S2U-RNA) to 2-selenouridine (Se2U-RNA). Acts in a two-step process involving geranylation of 2-thiouridine (S2U) to S-geranyl-2-thiouridine (geS2U) and subsequent selenation of the latter derivative to 2-selenouridine (Se2U) in the tRNA chain. The chain is tRNA 2-selenouridine synthase from Shewanella oneidensis (strain ATCC 700550 / JCM 31522 / CIP 106686 / LMG 19005 / NCIMB 14063 / MR-1).